A 251-amino-acid chain; its full sequence is NADPH-dependent oxidoreductase (251 aa).

This sequence belongs to the flavin oxidoreductase frp family. The cofactor is FMN.

Its function is as follows. Reduces FMN, organic nitro compounds and disulfide DTNB. Involved in maintenance of the cellular redox state and the disulfide stress response. The sequence is that of NADPH-dependent oxidoreductase (nfrA) from Staphylococcus saprophyticus subsp. saprophyticus (strain ATCC 15305 / DSM 20229 / NCIMB 8711 / NCTC 7292 / S-41).